Reading from the N-terminus, the 341-residue chain is N-acetyl-gamma-glutamyl-phosphate reductase (341 aa).

C163 is a catalytic residue.

This sequence belongs to the NAGSA dehydrogenase family. Type 1 subfamily.

The protein localises to the cytoplasm. It catalyses the reaction N-acetyl-L-glutamate 5-semialdehyde + phosphate + NADP(+) = N-acetyl-L-glutamyl 5-phosphate + NADPH + H(+). The protein operates within amino-acid biosynthesis; L-arginine biosynthesis; N(2)-acetyl-L-ornithine from L-glutamate: step 3/4. Its function is as follows. Catalyzes the NADPH-dependent reduction of N-acetyl-5-glutamyl phosphate to yield N-acetyl-L-glutamate 5-semialdehyde. The polypeptide is N-acetyl-gamma-glutamyl-phosphate reductase (Idiomarina loihiensis (strain ATCC BAA-735 / DSM 15497 / L2-TR)).